A 270-amino-acid polypeptide reads, in one-letter code: Formamidopyrimidine-DNA glycosylase (270 aa).

The active-site Schiff-base intermediate with DNA is proline 2. Glutamate 3 (proton donor) is an active-site residue. The Proton donor; for beta-elimination activity role is filled by lysine 58. The DNA site is built by histidine 91, arginine 110, and arginine 151. An FPG-type zinc finger spans residues 236-270 (RVYDREDAPCRRCATPIRRIVQAQRASFYCPTCQR). Arginine 260 acts as the Proton donor; for delta-elimination activity in catalysis.

Belongs to the FPG family. Monomer. Zn(2+) is required as a cofactor.

The enzyme catalyses Hydrolysis of DNA containing ring-opened 7-methylguanine residues, releasing 2,6-diamino-4-hydroxy-5-(N-methyl)formamidopyrimidine.. It carries out the reaction 2'-deoxyribonucleotide-(2'-deoxyribose 5'-phosphate)-2'-deoxyribonucleotide-DNA = a 3'-end 2'-deoxyribonucleotide-(2,3-dehydro-2,3-deoxyribose 5'-phosphate)-DNA + a 5'-end 5'-phospho-2'-deoxyribonucleoside-DNA + H(+). Involved in base excision repair of DNA damaged by oxidation or by mutagenic agents. Acts as a DNA glycosylase that recognizes and removes damaged bases. Has a preference for oxidized purines, such as 7,8-dihydro-8-oxoguanine (8-oxoG). Has AP (apurinic/apyrimidinic) lyase activity and introduces nicks in the DNA strand. Cleaves the DNA backbone by beta-delta elimination to generate a single-strand break at the site of the removed base with both 3'- and 5'-phosphates. This chain is Formamidopyrimidine-DNA glycosylase, found in Thiobacillus denitrificans (strain ATCC 25259 / T1).